The primary structure comprises 81 residues: ATP synthase subunit c, chloroplastic (81 aa).

2 helical membrane passes run 3-23 (PLIP…ASIG) and 57-77 (LAFM…LLFA).

Belongs to the ATPase C chain family. In terms of assembly, F-type ATPases have 2 components, F(1) - the catalytic core - and F(0) - the membrane proton channel. F(1) has five subunits: alpha(3), beta(3), gamma(1), delta(1), epsilon(1). F(0) has four main subunits: a(1), b(1), b'(1) and c(10-14). The alpha and beta chains form an alternating ring which encloses part of the gamma chain. F(1) is attached to F(0) by a central stalk formed by the gamma and epsilon chains, while a peripheral stalk is formed by the delta, b and b' chains.

It is found in the plastid. The protein localises to the chloroplast thylakoid membrane. Functionally, f(1)F(0) ATP synthase produces ATP from ADP in the presence of a proton or sodium gradient. F-type ATPases consist of two structural domains, F(1) containing the extramembraneous catalytic core and F(0) containing the membrane proton channel, linked together by a central stalk and a peripheral stalk. During catalysis, ATP synthesis in the catalytic domain of F(1) is coupled via a rotary mechanism of the central stalk subunits to proton translocation. Key component of the F(0) channel; it plays a direct role in translocation across the membrane. A homomeric c-ring of between 10-14 subunits forms the central stalk rotor element with the F(1) delta and epsilon subunits. The polypeptide is ATP synthase subunit c, chloroplastic (Cycas taitungensis (Prince sago)).